Reading from the N-terminus, the 344-residue chain is Tetraacyldisaccharide 4'-kinase (344 aa).

An ATP-binding site is contributed by 65-72 (HAGGTGKT).

It belongs to the LpxK family.

The enzyme catalyses a lipid A disaccharide + ATP = a lipid IVA + ADP + H(+). It participates in glycolipid biosynthesis; lipid IV(A) biosynthesis; lipid IV(A) from (3R)-3-hydroxytetradecanoyl-[acyl-carrier-protein] and UDP-N-acetyl-alpha-D-glucosamine: step 6/6. Transfers the gamma-phosphate of ATP to the 4'-position of a tetraacyldisaccharide 1-phosphate intermediate (termed DS-1-P) to form tetraacyldisaccharide 1,4'-bis-phosphate (lipid IVA). In Neisseria meningitidis serogroup B (strain ATCC BAA-335 / MC58), this protein is Tetraacyldisaccharide 4'-kinase.